A 645-amino-acid chain; its full sequence is Chaperone protein DnaK (645 aa).

Phosphothreonine; by autocatalysis is present on Thr-201. Over residues 606 to 629 (NTNNATAGDNNTTDTGSSSNSDGS) the composition is skewed to low complexity. The segment at 606 to 645 (NTNNATAGDNNTTDTGSSSNSDGSKVVDSDYQEIDKKDGK) is disordered. Residues 630–645 (KVVDSDYQEIDKKDGK) show a composition bias toward basic and acidic residues.

The protein belongs to the heat shock protein 70 family.

Its function is as follows. Acts as a chaperone. This chain is Chaperone protein DnaK, found in Ehrlichia ruminantium (strain Welgevonden).